The sequence spans 232 residues: Small ribosomal subunit protein uS3 (232 aa).

Positions 39-107 constitute a KH type-2 domain; the sequence is VRQYLTKELK…PAQINIAEVR (69 aa).

The protein belongs to the universal ribosomal protein uS3 family. In terms of assembly, part of the 30S ribosomal subunit. Forms a tight complex with proteins S10 and S14.

Its function is as follows. Binds the lower part of the 30S subunit head. Binds mRNA in the 70S ribosome, positioning it for translation. This Aliivibrio fischeri (strain MJ11) (Vibrio fischeri) protein is Small ribosomal subunit protein uS3.